The primary structure comprises 524 residues: Probable pectinesterase/pectinesterase inhibitor 19 (524 aa).

Residues 1 to 22 (MLVKVFSFFILMITMVVIGVSK) form the signal peptide. Residues 23–172 (EYCDDKQSCQ…ISRARIALAL (150 aa)) are pectinesterase inhibitor 19. Residues 215–510 (DVVVAKDGTG…FTVAKLLDGE (296 aa)) form a pectinesterase 19 region. Residues Asn-265 and Asn-281 are each glycosylated (N-linked (GlcNAc...) asparagine). Position 290 (Thr-290) interacts with substrate. Asp-343 (proton donor; for pectinesterase activity) is an active-site residue. Residues Cys-357 and Cys-377 are joined by a disulfide bond. The active-site Nucleophile; for pectinesterase activity is the Asp-364. N-linked (GlcNAc...) asparagine glycosylation occurs at Asn-412. Residues Arg-430 and Trp-432 each coordinate substrate.

This sequence in the N-terminal section; belongs to the PMEI family. The protein in the C-terminal section; belongs to the pectinesterase family. Expressed in siliques, but not in flower buds.

The protein resides in the secreted. It is found in the cell wall. The enzyme catalyses [(1-&gt;4)-alpha-D-galacturonosyl methyl ester](n) + n H2O = [(1-&gt;4)-alpha-D-galacturonosyl](n) + n methanol + n H(+). It functions in the pathway glycan metabolism; pectin degradation; 2-dehydro-3-deoxy-D-gluconate from pectin: step 1/5. Its function is as follows. Acts in the modification of cell walls via demethylesterification of cell wall pectin. This is Probable pectinesterase/pectinesterase inhibitor 19 (PME19) from Arabidopsis thaliana (Mouse-ear cress).